The chain runs to 337 residues: MSEESNEETKIIELEDIPGVGPETARKLREAGYSTIEAVAVASPSELANVGGITEGNAVKIIQAARKLANIGGFESGDKVLERRRSVKKITTGSKDLDELLGGGVETQAITEFFGEFGSGKTQICHQLAVNVQLPEDEGGLEGSVIIIDTENTFRPERIIQMAEAKGLDGNEVLKNIYVAQAYNSNHQMLLVDNAKELAEKLKKEGRPVRLIIVDSLMSHFRAEYVGRGTLADRQQKLNRHLHDLMKFGELYNAAIVVTNQVMARPDVLFGDPTKPVGGHIVAHTATFRIYLKKGKDDLRIARLIDSPHLPEGEAIFRVTERGIEDAEEKDKKKRKK.

G115–T122 lines the ATP pocket.

This sequence belongs to the eukaryotic RecA-like protein family.

Its function is as follows. Involved in DNA repair and in homologous recombination. Binds and assemble on single-stranded DNA to form a nucleoprotein filament. Hydrolyzes ATP in a ssDNA-dependent manner and promotes DNA strand exchange between homologous DNA molecules. The polypeptide is DNA repair and recombination protein RadA (radA) (Archaeoglobus fulgidus (strain ATCC 49558 / DSM 4304 / JCM 9628 / NBRC 100126 / VC-16)).